The primary structure comprises 249 residues: Type III pantothenate kinase (249 aa).

6 to 13 (DCGNSFIK) lines the ATP pocket. Substrate contacts are provided by residues tyrosine 93 and 100–103 (GMDR). Aspartate 102 serves as the catalytic Proton acceptor. Aspartate 122 is a K(+) binding site. Threonine 125 lines the ATP pocket. Residue threonine 181 coordinates substrate.

This sequence belongs to the type III pantothenate kinase family. Homodimer. NH4(+) is required as a cofactor. K(+) serves as cofactor.

The protein localises to the cytoplasm. It catalyses the reaction (R)-pantothenate + ATP = (R)-4'-phosphopantothenate + ADP + H(+). It functions in the pathway cofactor biosynthesis; coenzyme A biosynthesis; CoA from (R)-pantothenate: step 1/5. Its function is as follows. Catalyzes the phosphorylation of pantothenate (Pan), the first step in CoA biosynthesis. In Pseudomonas putida (strain W619), this protein is Type III pantothenate kinase.